Consider the following 236-residue polypeptide: Peptidase E (236 aa).

Active-site charge relay system residues include Ser-122, Asp-137, and His-159.

Belongs to the peptidase S51 family.

The protein localises to the cytoplasm. The catalysed reaction is Dipeptidase E catalyzes the hydrolysis of dipeptides Asp-|-Xaa. It does not act on peptides with N-terminal Glu, Asn or Gln, nor does it cleave isoaspartyl peptides.. Functionally, hydrolyzes dipeptides containing N-terminal aspartate residues. May play a role in allowing the cell to use peptide aspartate to spare carbon otherwise required for the synthesis of the aspartate family of amino acids. The polypeptide is Peptidase E (Shewanella sp. (strain MR-4)).